Reading from the N-terminus, the 137-residue chain is Endoribonuclease YbeY (137 aa).

The Zn(2+) site is built by His103, His107, and His113.

The protein belongs to the endoribonuclease YbeY family. Zn(2+) is required as a cofactor.

It localises to the cytoplasm. In terms of biological role, single strand-specific metallo-endoribonuclease involved in late-stage 70S ribosome quality control and in maturation of the 3' terminus of the 16S rRNA. The polypeptide is Endoribonuclease YbeY (Acholeplasma laidlawii (strain PG-8A)).